Consider the following 138-residue polypeptide: Large ribosomal subunit protein bL17 (138 aa).

This sequence belongs to the bacterial ribosomal protein bL17 family. In terms of assembly, part of the 50S ribosomal subunit. Contacts protein L32.

This chain is Large ribosomal subunit protein bL17, found in Phenylobacterium zucineum (strain HLK1).